Here is a 563-residue protein sequence, read N- to C-terminus: Arginine--tRNA ligase (563 aa).

Residues 123-133 carry the 'HIGH' region motif; it reads PNIAKDMHVGH.

The protein belongs to the class-I aminoacyl-tRNA synthetase family. In terms of assembly, monomer.

It is found in the cytoplasm. The enzyme catalyses tRNA(Arg) + L-arginine + ATP = L-arginyl-tRNA(Arg) + AMP + diphosphate. The chain is Arginine--tRNA ligase (argS) from Chlamydia trachomatis serovar D (strain ATCC VR-885 / DSM 19411 / UW-3/Cx).